The chain runs to 400 residues: Elongation factor Tu (400 aa).

Residues 10–209 (KPHVNIGTIG…AVDKYIPTPQ (200 aa)) form the tr-type G domain. The segment at 19–26 (GHVDHGKT) is G1. 19–26 (GHVDHGKT) contributes to the GTP binding site. T26 lines the Mg(2+) pocket. Residues 60-64 (GITIN) form a G2 region. Positions 81–84 (DCPG) are G3. GTP contacts are provided by residues 81-85 (DCPGH) and 136-139 (NKVD). The segment at 136–139 (NKVD) is G4. A G5 region spans residues 174-176 (SAL).

This sequence belongs to the TRAFAC class translation factor GTPase superfamily. Classic translation factor GTPase family. EF-Tu/EF-1A subfamily. Monomer.

It localises to the cytoplasm. The catalysed reaction is GTP + H2O = GDP + phosphate + H(+). Its function is as follows. GTP hydrolase that promotes the GTP-dependent binding of aminoacyl-tRNA to the A-site of ribosomes during protein biosynthesis. In Caldicellulosiruptor bescii (strain ATCC BAA-1888 / DSM 6725 / KCTC 15123 / Z-1320) (Anaerocellum thermophilum), this protein is Elongation factor Tu.